Reading from the N-terminus, the 1756-residue chain is Transposon Ty1-PR2 Gag-Pol polyprotein (1756 aa).

Polar residues-rich tracts occupy residues 1–10 (MESQQLSNYP), 48–60 (TKAN…TPAS), and 127–152 (QSQF…GNTF). 3 disordered regions span residues 1–93 (MESQ…MMTQ), 126–173 (PQSQ…RPPP), and 352–421 (GSRN…SKST). Residues 153–165 (TDSSSADSDMTST) show a composition bias toward low complexity. The RNA-binding stretch occupies residues 299–401 (NNGIHINNKV…NSKSKTARAH (103 aa)). Low complexity predominate over residues 402 to 418 (NVSTSNNSPSTDNDSIS). The active-site For protease activity; shared with dimeric partner is Asp-461. The integrase-type zinc finger-like stretch occupies residues 583 to 640 (NVHTSESTRKYPYPFIHRMLAHANAQTIRYSLKNNTITYFNESDVDWSSAIDYQCPDC). The region spanning 660 to 836 (NSYEPFQYLH…AGLDISTLLP (177 aa)) is the Integrase catalytic domain. The Mg(2+) site is built by Asp-671 and Asp-736. 3 disordered regions span residues 957-1088 (SKAV…ETEK), 1093-1112 (RSPS…NIVP), and 1131-1188 (DLPL…DNET). Residues 961–970 (SPTDSTPPST) are compositionally biased toward low complexity. The segment covering 1006–1016 (STPQISNIEST) has biased composition (polar residues). The segment covering 1039–1054 (ESSHASKSKDFRHSDS) has biased composition (basic and acidic residues). 2 stretches are compositionally biased toward polar residues: residues 1055 to 1083 (YSEN…QISD) and 1102 to 1112 (PENNSSHNIVP). Residues 1179–1213 (KKRSLEDNETEIKVSRDTWNTKNMRSLEPPRSKKR) carry the Bipartite nuclear localization signal motif. Residues 1339–1477 (NNYYITQLDI…DILGLEIKYQ (139 aa)) enclose the Reverse transcriptase Ty1/copia-type domain. Asp-1347, Asp-1428, Asp-1429, Asp-1611, Glu-1653, and Asp-1686 together coordinate Mg(2+). Residues 1611–1753 (DASYGNQPYY…IKTFKLLTNK (143 aa)) enclose the RNase H Ty1/copia-type domain.

The capsid protein forms a homotrimer, from which the VLPs are assembled. The protease is a homodimer, whose active site consists of two apposed aspartic acid residues. Post-translationally, initially, virus-like particles (VLPs) are composed of the structural unprocessed proteins Gag and Gag-Pol, and also contain the host initiator methionine tRNA (tRNA(i)-Met) which serves as a primer for minus-strand DNA synthesis, and a dimer of genomic Ty RNA. Processing of the polyproteins occurs within the particle and proceeds by an ordered pathway, called maturation. First, the protease (PR) is released by autocatalytic cleavage of the Gag-Pol polyprotein yielding capsid protein p45 and a Pol-p154 precursor protein. This cleavage is a prerequisite for subsequent processing of Pol-p154 at the remaining sites to release the mature structural and catalytic proteins. Maturation takes place prior to the RT reaction and is required to produce transposition-competent VLPs.

The protein resides in the cytoplasm. It is found in the nucleus. The catalysed reaction is DNA(n) + a 2'-deoxyribonucleoside 5'-triphosphate = DNA(n+1) + diphosphate. It carries out the reaction Endonucleolytic cleavage to 5'-phosphomonoester.. In terms of biological role, capsid protein (CA) is the structural component of the virus-like particle (VLP), forming the shell that encapsulates the retrotransposons dimeric RNA genome. The particles are assembled from trimer-clustered units and there are holes in the capsid shells that allow for the diffusion of macromolecules. CA also has nucleocapsid-like chaperone activity, promoting primer tRNA(i)-Met annealing to the multipartite primer-binding site (PBS), dimerization of Ty1 RNA and initiation of reverse transcription. The aspartyl protease (PR) mediates the proteolytic cleavages of the Gag and Gag-Pol polyproteins after assembly of the VLP. Functionally, reverse transcriptase/ribonuclease H (RT) is a multifunctional enzyme that catalyzes the conversion of the retro-elements RNA genome into dsDNA within the VLP. The enzyme displays a DNA polymerase activity that can copy either DNA or RNA templates, and a ribonuclease H (RNase H) activity that cleaves the RNA strand of RNA-DNA heteroduplexes during plus-strand synthesis and hydrolyzes RNA primers. The conversion leads to a linear dsDNA copy of the retrotransposon that includes long terminal repeats (LTRs) at both ends. Its function is as follows. Integrase (IN) targets the VLP to the nucleus, where a subparticle preintegration complex (PIC) containing at least integrase and the newly synthesized dsDNA copy of the retrotransposon must transit the nuclear membrane. Once in the nucleus, integrase performs the integration of the dsDNA into the host genome. The sequence is that of Transposon Ty1-PR2 Gag-Pol polyprotein (TY1B-PR2) from Saccharomyces cerevisiae (strain ATCC 204508 / S288c) (Baker's yeast).